A 138-amino-acid polypeptide reads, in one-letter code: MSGTLLAFDFGTKSIGVAVGQRITGTARPLPAIKAQDGTPDWNLIERLLKEWQPDEIIVGLPLNMDGTEQPLTARARKFANRIHGRFGVEVKLHDERLSTVEARSGLFEQGGYRALNKGKVDSASAVIILESYFEQGY.

It belongs to the YqgF nuclease family.

The protein localises to the cytoplasm. Could be a nuclease involved in processing of the 5'-end of pre-16S rRNA. The sequence is that of Putative pre-16S rRNA nuclease from Escherichia fergusonii (strain ATCC 35469 / DSM 13698 / CCUG 18766 / IAM 14443 / JCM 21226 / LMG 7866 / NBRC 102419 / NCTC 12128 / CDC 0568-73).